Here is a 311-residue protein sequence, read N- to C-terminus: Olfactory receptor 5M8 (311 aa).

At 1–24 (MRRNCTLVTEFILLGLTSRRELQI) the chain is on the extracellular side. A glycan (N-linked (GlcNAc...) asparagine) is linked at N4. Residues 25–45 (LLFTLFLAIYMVTVAGNLGMI) form a helical membrane-spanning segment. Residues 46 to 53 (VLIQANAW) lie on the Cytoplasmic side of the membrane. The chain crosses the membrane as a helical span at residues 54–74 (LHMPMYFFLSHLSFVDLCFSS). Residues 75-98 (NVTPKMLEIFLSEKKSISYPACLV) are Extracellular-facing. The cysteines at positions 96 and 188 are disulfide-linked. A helical transmembrane segment spans residues 99-119 (QCYLFIALVHVEIYILAVMAF). The Cytoplasmic portion of the chain corresponds to 120–138 (DRYMAICNPLLYGSRMSKS). A helical transmembrane segment spans residues 139–159 (VCSFLITVPYVYGALTGLMET). Over 160–195 (MWTYNLAFCGPNEINHFYCADPPLIKLACSDTYNKE) the chain is Extracellular. Residues 196–216 (LSMFIVAGWNLSFSLFIICIS) form a helical membrane-spanning segment. At 217-236 (YLYIFPAILKIRSTEGRQKA) the chain is on the cytoplasmic side. Residues 237–257 (FSTCGSHLTAVTIFYATLFFM) form a helical membrane-spanning segment. The Extracellular segment spans residues 258–270 (YLRPPSKESVEQG). The helical transmembrane segment at 271–291 (KMVAVFYTTVIPMLNLIIYSL) threads the bilayer. Residues 292–311 (RNKNVKEALIKELSMKIYFS) lie on the Cytoplasmic side of the membrane.

The protein belongs to the G-protein coupled receptor 1 family.

Its subcellular location is the cell membrane. In terms of biological role, odorant receptor. This chain is Olfactory receptor 5M8 (OR5M8), found in Homo sapiens (Human).